The primary structure comprises 230 residues: Large ribosomal subunit protein uL1 (230 aa).

The protein belongs to the universal ribosomal protein uL1 family. Part of the 50S ribosomal subunit.

Functionally, binds directly to 23S rRNA. The L1 stalk is quite mobile in the ribosome, and is involved in E site tRNA release. Its function is as follows. Protein L1 is also a translational repressor protein, it controls the translation of the L11 operon by binding to its mRNA. This Leptospira biflexa serovar Patoc (strain Patoc 1 / Ames) protein is Large ribosomal subunit protein uL1.